Here is a 121-residue protein sequence, read N- to C-terminus: Large ribosomal subunit protein bL12 (121 aa).

Belongs to the bacterial ribosomal protein bL12 family. As to quaternary structure, homodimer. Part of the ribosomal stalk of the 50S ribosomal subunit. Forms a multimeric L10(L12)X complex, where L10 forms an elongated spine to which 2 to 4 L12 dimers bind in a sequential fashion. Binds GTP-bound translation factors.

Its function is as follows. Forms part of the ribosomal stalk which helps the ribosome interact with GTP-bound translation factors. Is thus essential for accurate translation. This is Large ribosomal subunit protein bL12 from Pediococcus pentosaceus (strain ATCC 25745 / CCUG 21536 / LMG 10740 / 183-1w).